The sequence spans 322 residues: MRKKSLTLLSDGYLFRKENTIYFENARGKKPLAIEGIYDIYIYGKVSISSQALHYLAQKGIALHFFNHYGYYDGSFYPRESLHSGYLVVNQVEHYLDKDKRLELAKLFIIGGIKNMEWNLLKFKNKTKFSSYIEELNNCNKITEVMNVEGRVRTEYYRLWDETLPDDFKIVKRTRRPPKNEMNALISFLNSRLYPAIITELYNTQLTPTVSYLHEPHERRFSLALDLSEIFKPMIADRLANRLVKQGIIQKKHFRDDLNGVLLNKEGMKVVLEHFNKEMDKTVNHKKLKKNVSKRRLIRLEAYKLVKHLVGQKRYEPLVAWF.

Positions 149, 214, and 229 each coordinate Mn(2+).

Belongs to the CRISPR-associated endonuclease Cas1 family. Homodimer, forms a heterotetramer with a Cas2 homodimer. Requires Mg(2+) as cofactor. Mn(2+) is required as a cofactor.

CRISPR (clustered regularly interspaced short palindromic repeat), is an adaptive immune system that provides protection against mobile genetic elements (viruses, transposable elements and conjugative plasmids). CRISPR clusters contain spacers, sequences complementary to antecedent mobile elements, and target invading nucleic acids. CRISPR clusters are transcribed and processed into CRISPR RNA (crRNA). Acts as a dsDNA endonuclease. Involved in the integration of spacer DNA into the CRISPR cassette. The polypeptide is CRISPR-associated endonuclease Cas1 (Methanocaldococcus jannaschii (strain ATCC 43067 / DSM 2661 / JAL-1 / JCM 10045 / NBRC 100440) (Methanococcus jannaschii)).